A 604-amino-acid polypeptide reads, in one-letter code: Protein hemingway (604 aa).

Disordered regions lie at residues 1 to 70 (MSGA…GNPH), 103 to 309 (NQLS…PTSQ), 359 to 387 (SDRR…GGGI), and 544 to 585 (TIKA…IDLD). Acidic residues-rich tracts occupy residues 8-38 (SDEE…YIEP), 135-183 (EDEA…DDAQ), 194-214 (DDSD…EDEP), and 288-300 (EEPE…EENQ). Low complexity predominate over residues 368–379 (EMSSMTETTMTS).

The protein belongs to the CFAP97 family. As to expression, detected in ciliated sensory neurons at all stages of development, and in adult testis.

It is found in the cell projection. Its subcellular location is the cilium. It localises to the perikaryon. The protein localises to the cytoplasm. Functionally, involved in assembly and/or maintenance of motile cilia. Required during spermatogenesis for axoneme elongation. Necessary for optimal function of the chordotonal (hearing) organs. This Drosophila melanogaster (Fruit fly) protein is Protein hemingway.